The sequence spans 357 residues: Glucose-6-phosphatase catalytic subunit 1 (357 aa).

Over 1-28 (MEKGMDVLHDFGIQSTHYLQVNYQDSQD) the chain is Lumenal. A helical membrane pass occupies residues 29–49 (WFILVSVIADLRNAFYVLFPI). The Cytoplasmic portion of the chain corresponds to 50–60 (WFHLREAVGIK). Residues 61–81 (LLWVAVIGDWLNLVFKWILFG) form a helical membrane-spanning segment. Over 82-117 (QRPYWWVMDTDYYSNTSVPLIKQFPVTCETGPGSPS) the chain is Lumenal. Arg-83 lines the substrate pocket. A glycan (N-linked (GlcNAc...) asparagine) is linked at Asn-96. A helical transmembrane segment spans residues 118 to 138 (GHAMGTAGVYYVMVTSTLSIF). The Proton donor role is filled by His-119. Topologically, residues 139 to 147 (RGRKRPTYR) are cytoplasmic. The chain crosses the membrane as a helical span at residues 148–168 (FRCLNILLWLGFWAVQLNVCL). Residues 169-170 (SR) are Lumenal-facing. Arg-170 lines the substrate pocket. Residues 171–191 (IYLAAHFPHQVVAGVLSGIAV) form a helical membrane-spanning segment. The active-site Nucleophile is His-176. At 192–209 (AETFRHIQSIYNASLKKY) the chain is on the cytoplasmic side. The helical transmembrane segment at 210-230 (FLITFFLFSFAIGFYLLLKGL) threads the bilayer. Topologically, residues 231–254 (GVDLLWTLEKARRWCERPEWVHID) are lumenal. Residues 255 to 275 (TTPFASLLKNVGTLFGLGVTL) traverse the membrane as a helical segment. At 276–291 (NSSMYRESCKGKLSKW) the chain is on the cytoplasmic side. Residues 292–312 (FPFRLSCIVVSLILLHLFDSL) form a helical membrane-spanning segment. The Lumenal portion of the chain corresponds to 313–320 (KPPSQTEL). The helical transmembrane segment at 321 to 341 (IFYTLSFCKSAAVPLASVSLI) threads the bilayer. Over 342–357 (PYCLARVFDQPDKKSL) the chain is Cytoplasmic. The Prevents secretion from ER motif lies at 354–357 (KKSL).

It belongs to the glucose-6-phosphatase family.

The protein localises to the endoplasmic reticulum membrane. It catalyses the reaction D-glucose 6-phosphate + H2O = D-glucose + phosphate. Its pathway is carbohydrate biosynthesis; gluconeogenesis. In terms of biological role, hydrolyzes glucose-6-phosphate to glucose in the endoplasmic reticulum. Forms with the glucose-6-phosphate transporter (SLC37A4/G6PT) the complex responsible for glucose production in the terminal step of glycogenolysis and gluconeogenesis. Hence, it is the key enzyme in homeostatic regulation of blood glucose levels. This is Glucose-6-phosphatase catalytic subunit 1 (G6PC1) from Canis lupus familiaris (Dog).